A 140-amino-acid polypeptide reads, in one-letter code: Small ribosomal subunit protein uS11c (140 aa).

The protein belongs to the universal ribosomal protein uS11 family. In terms of assembly, part of the 30S ribosomal subunit.

It is found in the plastid. It localises to the chloroplast. This is Small ribosomal subunit protein uS11c from Pelargonium hortorum (Common geranium).